An 86-amino-acid chain; its full sequence is Large ribosomal subunit protein bL31 (86 aa).

The protein belongs to the bacterial ribosomal protein bL31 family. Type A subfamily. As to quaternary structure, part of the 50S ribosomal subunit.

Binds the 23S rRNA. The chain is Large ribosomal subunit protein bL31 from Parasynechococcus marenigrum (strain WH8102).